Here is a 1171-residue protein sequence, read N- to C-terminus: ATP-dependent helicase/deoxyribonuclease subunit B (1171 aa).

Belongs to the helicase family. AddB/RexB type 2 subfamily. Heterodimer of AddA and RexB. The cofactor is Mg(2+).

In terms of biological role, the heterodimer acts as both an ATP-dependent DNA helicase and an ATP-dependent, dual-direction single-stranded exonuclease. Recognizes the chi site generating a DNA molecule suitable for the initiation of homologous recombination. This subunit has 5' -&gt; 3' nuclease activity but not helicase activity. This Leuconostoc citreum (strain KM20) protein is ATP-dependent helicase/deoxyribonuclease subunit B.